A 299-amino-acid chain; its full sequence is MSRDLPNVIILIGPTASGKTELAIEIAEYFKTHIHNIDSRQIYKSMDIGTAKPSKNQQKKIKHFLIDIEEPIHPINVKQFQGIAQKSIKSEIKQNNLPFLVGGSGLYMNSITKGFFVPDVPPQNDLRKQLEELGQKKCWDLLKNCDPLSTKKINFADHIRTIRALEVFYVTGKPLSTLKVQRAPDWRILELGLDRDNLKERILQRTKNMFSAGIIEETNYLISKYGFDLPILETIGYREAKDVLKNHSTIDKAIELTTTKTIQYAKRQKTWFRNKNNPLWLDNKNLLKDAIIKIESFLS.

Residue 13-20 (GPTASGKT) coordinates ATP. 15-20 (TASGKT) contacts substrate. An interaction with substrate tRNA region spans residues 38–41 (DSRQ).

This sequence belongs to the IPP transferase family. Monomer. Mg(2+) is required as a cofactor.

It carries out the reaction adenosine(37) in tRNA + dimethylallyl diphosphate = N(6)-dimethylallyladenosine(37) in tRNA + diphosphate. Its function is as follows. Catalyzes the transfer of a dimethylallyl group onto the adenine at position 37 in tRNAs that read codons beginning with uridine, leading to the formation of N6-(dimethylallyl)adenosine (i(6)A). This Prochlorococcus marinus (strain AS9601) protein is tRNA dimethylallyltransferase.